We begin with the raw amino-acid sequence, 859 residues long: Envelope glycoprotein (859 aa).

Residues 1–6 constitute a propeptide that is removed on maturation; it reads MVSIAF. Topologically, residues 7–614 are extracellular; sequence YGGIPGGIST…KDLWSHIGNW (608 aa). Asn-40, Asn-112, Asn-141, Asn-148, Asn-186, Asn-214, Asn-233, Asn-244, Asn-340, Asn-368, Asn-399, Asn-406, Asn-411, and Asn-422 each carry an N-linked (GlcNAc...) asparagine; by host glycan. The tract at residues 446-466 is fusion peptide; that stretch reads FGISAIVAAIVAATAIAASAT. N-linked (GlcNAc...) asparagine; by host glycosylation is found at Asn-483 and Asn-490. The segment at 498-513 is immunosuppression; it reads LIERQIKILYAMILQT. Residues Asn-550 and Asn-557 are each glycosylated (N-linked (GlcNAc...) asparagine; by host). 2 coiled-coil regions span residues 576 to 624 and 663 to 699; these read ILTT…SIIK and KKFHHKHASREDTWDQAQHSIHLAGVTGGSGDKYYKQ. Residues 615–635 traverse the membrane as a helical segment; that stretch reads IPGLGASIIKYIVMFLLIYLL. Over 636 to 859 the chain is Cytoplasmic; that stretch reads LTSSPKILRA…TSHVSMPQYV (224 aa). A disordered region spans residues 745 to 764; it reads AAINEHKNGSGGNNPHQGSL.

As to quaternary structure, the mature envelope protein (Env) consists of a trimer of SU-TM heterodimers attached by noncovalent interactions or by a labile interchain disulfide bond. In terms of processing, specific enzymatic cleavages in vivo yield mature proteins. Envelope glycoproteins are synthesized as an inactive precursor that is N-glycosylated and processed likely by host cell furin or by a furin-like protease in the Golgi to yield the mature SU and TM proteins. The cleavage site between SU and TM requires the minimal sequence [KR]-X-[KR]-R.

The protein localises to the virion membrane. It localises to the host cell membrane. Its function is as follows. The surface protein (SU) attaches the virus to the host cell by binding to its receptor. This interaction triggers the refolding of the transmembrane protein (TM) and is thought to activate its fusogenic potential by unmasking its fusion peptide. Fusion occurs at the host cell plasma membrane. The transmembrane protein (TM) acts as a class I viral fusion protein. Under the current model, the protein has at least 3 conformational states: pre-fusion native state, pre-hairpin intermediate state, and post-fusion hairpin state. During viral and target cell membrane fusion, the coiled coil regions (heptad repeats) assume a trimer-of-hairpins structure, positioning the fusion peptide in close proximity to the C-terminal region of the ectodomain. The formation of this structure appears to drive apposition and subsequent fusion of viral and target cell membranes. Membranes fusion leads to delivery of the nucleocapsid into the cytoplasm. The chain is Envelope glycoprotein (env) from Equus asinus (Donkey).